The primary structure comprises 410 residues: Transcription termination factor, mitochondrial (410 aa).

The N-terminal 44 residues, 1-44 (MIRSLLRSFETALKLHAGLNMHPMHCSRRLLFSQYENRASPSRL), are a transit peptide targeting the mitochondrion.

It belongs to the mTERF family.

It is found in the mitochondrion. Its function is as follows. Transcription termination factor. Binds promoter DNA and regulates mitochondrial replication and transcription. Transcription termination activity may be polarized with highest termination activity occurring when its DNA-binding site is positioned in the reverse orientation with respect to the incoming RNA polymerase. Required for normal topology and maintenance of mitochondrial DNA (mtDNA) levels. Regulates mtDNA replication by promoting replication pausing, possibly by acting as a natural barrier to replication fork progression. Its function in replication pausing prevents unregulated replication that may occur for example by collisions between the machineries of DNA replication and transcription during mtDNA synthesis. This ensures the incorporation of RNA transcripts into replication intermediates at the replication fork and allow for proper fork progression. Shares mtDNA binding sites with the mitochondrial termination factor mTerf5 and thereby may antagonize mTerf5 function during replication to regulate pausing. Likely to function downstream of Dref which activates genes involved in mtDNA replication and maintenance. This chain is Transcription termination factor, mitochondrial, found in Drosophila melanogaster (Fruit fly).